The chain runs to 122 residues: uncharacterized protein (122 aa).

This is an uncharacterized protein from Dictyostelium discoideum (Social amoeba).